The sequence spans 295 residues: 4-hydroxy-tetrahydrodipicolinate synthase 1 (295 aa).

Thr46 contributes to the pyruvate binding site. The active-site Proton donor/acceptor is Tyr134. Catalysis depends on Lys162, which acts as the Schiff-base intermediate with substrate. Val204 provides a ligand contact to pyruvate.

The protein belongs to the DapA family. Homotetramer; dimer of dimers.

Its subcellular location is the cytoplasm. It carries out the reaction L-aspartate 4-semialdehyde + pyruvate = (2S,4S)-4-hydroxy-2,3,4,5-tetrahydrodipicolinate + H2O + H(+). It functions in the pathway amino-acid biosynthesis; L-lysine biosynthesis via DAP pathway; (S)-tetrahydrodipicolinate from L-aspartate: step 3/4. Its function is as follows. Catalyzes the condensation of (S)-aspartate-beta-semialdehyde [(S)-ASA] and pyruvate to 4-hydroxy-tetrahydrodipicolinate (HTPA). This is 4-hydroxy-tetrahydrodipicolinate synthase 1 from Halalkalibacterium halodurans (strain ATCC BAA-125 / DSM 18197 / FERM 7344 / JCM 9153 / C-125) (Bacillus halodurans).